We begin with the raw amino-acid sequence, 156 residues long: D-aminoacyl-tRNA deacylase (156 aa).

Positions 142 to 143 match the Gly-cisPro motif, important for rejection of L-amino acids motif; sequence GP.

The protein belongs to the DTD family. In terms of assembly, homodimer.

The protein resides in the cytoplasm. It catalyses the reaction glycyl-tRNA(Ala) + H2O = tRNA(Ala) + glycine + H(+). It carries out the reaction a D-aminoacyl-tRNA + H2O = a tRNA + a D-alpha-amino acid + H(+). Its function is as follows. An aminoacyl-tRNA editing enzyme that deacylates mischarged D-aminoacyl-tRNAs. Also deacylates mischarged glycyl-tRNA(Ala), protecting cells against glycine mischarging by AlaRS. Acts via tRNA-based rather than protein-based catalysis; rejects L-amino acids rather than detecting D-amino acids in the active site. By recycling D-aminoacyl-tRNA to D-amino acids and free tRNA molecules, this enzyme counteracts the toxicity associated with the formation of D-aminoacyl-tRNA entities in vivo and helps enforce protein L-homochirality. The sequence is that of D-aminoacyl-tRNA deacylase from Cupriavidus pinatubonensis (strain JMP 134 / LMG 1197) (Cupriavidus necator (strain JMP 134)).